The sequence spans 158 residues: Probable inactive acireductone dioxygenase 2 (158 aa).

Belongs to the acireductone dioxygenase (ARD) family.

Its subcellular location is the cytoplasm. The protein localises to the nucleus. Its function is as follows. Probable inactive acireductone dioxygenase. This Caenorhabditis elegans protein is Probable inactive acireductone dioxygenase 2.